The following is a 634-amino-acid chain: Chaperone protein DnaK (634 aa).

Phosphothreonine; by autocatalysis is present on threonine 197. Residues 515–528 (LHKEDDKKRKESVD) show a composition bias toward basic and acidic residues. Disordered stretches follow at residues 515–536 (LHKE…ADAI) and 595–634 (YKAA…AEVE). Positions 603 to 615 (NAGGTAGGNGNAG) are enriched in gly residues.

The protein belongs to the heat shock protein 70 family.

Acts as a chaperone. This chain is Chaperone protein DnaK, found in Campylobacter hominis (strain ATCC BAA-381 / DSM 21671 / CCUG 45161 / LMG 19568 / NCTC 13146 / CH001A).